The sequence spans 202 residues: Glycerol-3-phosphate acyltransferase (202 aa).

Helical transmembrane passes span 2–22, 54–74, 88–108, 120–140, 141–161, and 162–182; these read MIVI…GYVI, FLVT…PLWL, NGLI…YLGF, VILG…FGIL, YLTK…VIGA, and LLIR…LLII.

It belongs to the PlsY family. In terms of assembly, probably interacts with PlsX.

It is found in the cell membrane. It catalyses the reaction an acyl phosphate + sn-glycerol 3-phosphate = a 1-acyl-sn-glycero-3-phosphate + phosphate. It functions in the pathway lipid metabolism; phospholipid metabolism. Functionally, catalyzes the transfer of an acyl group from acyl-phosphate (acyl-PO(4)) to glycerol-3-phosphate (G3P) to form lysophosphatidic acid (LPA). This enzyme utilizes acyl-phosphate as fatty acyl donor, but not acyl-CoA or acyl-ACP. This chain is Glycerol-3-phosphate acyltransferase, found in Staphylococcus saprophyticus subsp. saprophyticus (strain ATCC 15305 / DSM 20229 / NCIMB 8711 / NCTC 7292 / S-41).